We begin with the raw amino-acid sequence, 184 residues long: Large ribosomal subunit protein uL6 (184 aa).

This sequence belongs to the universal ribosomal protein uL6 family. Part of the 50S ribosomal subunit.

This protein binds to the 23S rRNA, and is important in its secondary structure. It is located near the subunit interface in the base of the L7/L12 stalk, and near the tRNA binding site of the peptidyltransferase center. The protein is Large ribosomal subunit protein uL6 of Thermomicrobium roseum (strain ATCC 27502 / DSM 5159 / P-2).